The sequence spans 137 residues: Proofreading thioesterase EntH (137 aa).

The active-site Nucleophile or proton acceptor is Glu63.

This sequence belongs to the thioesterase PaaI family. Homotetramer. Dimer of dimers. Interacts specifically with the aryl carrier protein (ArCP) domain of EntB.

The protein resides in the cytoplasm. Its pathway is siderophore biosynthesis; enterobactin biosynthesis. In terms of biological role, required for optimal enterobactin synthesis. Acts as a proofreading enzyme that prevents EntB misacylation by hydrolyzing the thioester bound existing between EntB and wrongly charged molecules. The polypeptide is Proofreading thioesterase EntH (Citrobacter koseri (strain ATCC BAA-895 / CDC 4225-83 / SGSC4696)).